A 711-amino-acid chain; its full sequence is Ribosomal RNA large subunit methyltransferase K/L (711 aa).

The 112-residue stretch at 43 to 154 folds into the THUMP domain; that stretch reads TLYRTLLWSR…RENLVISLDL (112 aa).

It belongs to the methyltransferase superfamily. RlmKL family.

The protein localises to the cytoplasm. It carries out the reaction guanosine(2445) in 23S rRNA + S-adenosyl-L-methionine = N(2)-methylguanosine(2445) in 23S rRNA + S-adenosyl-L-homocysteine + H(+). The catalysed reaction is guanosine(2069) in 23S rRNA + S-adenosyl-L-methionine = N(2)-methylguanosine(2069) in 23S rRNA + S-adenosyl-L-homocysteine + H(+). Functionally, specifically methylates the guanine in position 2445 (m2G2445) and the guanine in position 2069 (m7G2069) of 23S rRNA. The protein is Ribosomal RNA large subunit methyltransferase K/L of Haemophilus influenzae (strain PittGG).